The sequence spans 190 residues: Probable molybdenum cofactor guanylyltransferase (190 aa).

Residues 9–11 (LCG), K21, D65, and D94 each bind GTP. Residue D94 participates in Mg(2+) binding.

Belongs to the MobA family. It depends on Mg(2+) as a cofactor.

It localises to the cytoplasm. It carries out the reaction Mo-molybdopterin + GTP + H(+) = Mo-molybdopterin guanine dinucleotide + diphosphate. Its function is as follows. Transfers a GMP moiety from GTP to Mo-molybdopterin (Mo-MPT) cofactor (Moco or molybdenum cofactor) to form Mo-molybdopterin guanine dinucleotide (Mo-MGD) cofactor. This chain is Probable molybdenum cofactor guanylyltransferase, found in Flavobacterium johnsoniae (strain ATCC 17061 / DSM 2064 / JCM 8514 / BCRC 14874 / CCUG 350202 / NBRC 14942 / NCIMB 11054 / UW101) (Cytophaga johnsonae).